We begin with the raw amino-acid sequence, 726 residues long: Transferrin (726 aa).

The signal sequence occupies residues 1-16; it reads MLLCLTLLFSASAVLA. Transferrin-like domains lie at 29-367 and 374-719; these read YKVC…ERDT and VRFC…VIRA. 2 cysteine pairs are disulfide-bonded: Cys32–Cys63 and Cys41–Cys54. Fe(3+) is bound by residues Asp78 and Tyr111. Intrachain disulfides connect Cys135-Cys231, Cys184-Cys210, Cys207-Cys216, and Cys274-Cys287. 4 residues coordinate hydrogencarbonate: Thr137, Arg141, Val143, and Gly144. Asn162 carries an N-linked (GlcNAc...) asparagine glycan. Tyr225 lines the Fe(3+) pocket. Residues Asn337 and Asn358 are each glycosylated (N-linked (GlcNAc...) asparagine). Disulfide bonds link Cys377–Cys414 and Cys387–Cys405. The Fe(3+) site is built by Asp429 and Tyr457. An intrachain disulfide couples Cys481 to Cys562. Hydrogencarbonate-binding residues include Thr483, Arg487, Ala489, and Gly490. The Fe(3+) site is built by Tyr573 and His642.

It belongs to the transferrin family.

The protein resides in the secreted. Its function is as follows. Transferrins are iron binding transport proteins which bind Fe(3+) ion in association with the binding of an anion, usually bicarbonate. The protein is Transferrin of Blaberus discoidalis (Tropical cockroach).